Consider the following 185-residue polypeptide: Ribosome-recycling factor (185 aa).

Belongs to the RRF family.

It is found in the cytoplasm. Functionally, responsible for the release of ribosomes from messenger RNA at the termination of protein biosynthesis. May increase the efficiency of translation by recycling ribosomes from one round of translation to another. The protein is Ribosome-recycling factor of Alteromonas mediterranea (strain DSM 17117 / CIP 110805 / LMG 28347 / Deep ecotype).